We begin with the raw amino-acid sequence, 207 residues long: Large ribosomal subunit protein uL3 (207 aa).

Residues 129 to 152 (AGGPAGHGSRFQRHPGSIGSNTTP) are disordered.

This sequence belongs to the universal ribosomal protein uL3 family. In terms of assembly, part of the 50S ribosomal subunit. Forms a cluster with proteins L14 and L19.

Functionally, one of the primary rRNA binding proteins, it binds directly near the 3'-end of the 23S rRNA, where it nucleates assembly of the 50S subunit. This is Large ribosomal subunit protein uL3 from Leptospira biflexa serovar Patoc (strain Patoc 1 / ATCC 23582 / Paris).